A 459-amino-acid chain; its full sequence is Argininosuccinate lyase (459 aa).

Belongs to the lyase 1 family. Argininosuccinate lyase subfamily.

The protein localises to the cytoplasm. The catalysed reaction is 2-(N(omega)-L-arginino)succinate = fumarate + L-arginine. It functions in the pathway amino-acid biosynthesis; L-arginine biosynthesis; L-arginine from L-ornithine and carbamoyl phosphate: step 3/3. This chain is Argininosuccinate lyase, found in Staphylococcus saprophyticus subsp. saprophyticus (strain ATCC 15305 / DSM 20229 / NCIMB 8711 / NCTC 7292 / S-41).